The following is an 885-amino-acid chain: Envelope glycoprotein B (885 aa).

Positions M1–A34 are cleaved as a signal peptide. The segment covering A29–L46 has biased composition (low complexity). Residues A29–G74 are disordered. Topologically, residues A35–P759 are virion surface. A compositionally biased stretch (acidic residues) spans P47 to E58. 2 N-linked (GlcNAc...) asparagine; by host glycosylation sites follow: N68 and N122. 5 disulfide bridges follow: C97-C558, C114-C514, C188-C252, C345-C393, and C581-C618. Involved in fusion and/or binding to host membrane stretches follow at residues V154–Y160 and R239–Y246. N379 and N411 each carry an N-linked (GlcNAc...) asparagine; by host glycan. The segment at R455–E478 is disordered. A glycan (N-linked (GlcNAc...) asparagine; by host) is linked at N659. Hydrophobic membrane proximal region stretches follow at residues I704–S757 and L716–L756. A helical membrane pass occupies residues F760 to F780. The Intravirion portion of the chain corresponds to R781–L885. The Golgi targeting motif lies at Y834–L837. Residues M866–L885 form a disordered region. An Internalization motif motif is present at residues Y874–L877.

This sequence belongs to the herpesviridae glycoprotein B family. Homotrimer; disulfide-linked. Binds to heparan sulfate proteoglycans. Interacts with gH/gL heterodimer.

The protein resides in the virion membrane. Its subcellular location is the host cell membrane. The protein localises to the host endosome membrane. It is found in the host Golgi apparatus membrane. In terms of biological role, envelope glycoprotein that forms spikes at the surface of virion envelope. Essential for the initial attachment to heparan sulfate moieties of the host cell surface proteoglycans. Involved in fusion of viral and cellular membranes leading to virus entry into the host cell. Following initial binding to its host receptors, membrane fusion is mediated by the fusion machinery composed at least of gB and the heterodimer gH/gL. May be involved in the fusion between the virion envelope and the outer nuclear membrane during virion egress. The chain is Envelope glycoprotein B from Herpes simplex virus type 2 (strain SA8) (Simian agent 8).